Consider the following 736-residue polypeptide: Myosin-7 (736 aa).

The Myosin motor domain maps to 1–342; it reads NWMVTRINAT…LLGLLEEMRD (342 aa). The tract at residues 219 to 241 is actin-binding; that stretch reads LNKLMTNLRSTHPHFVRCIIPNE. The 30-residue stretch at 345–374 folds into the IQ domain; it reads LSRIITRIQAQSRGVLSRMEYKKLLERRDS. Residues 403–736 are a coiled coil; it reads LLKSAETEKE…MNKKREAEFQ (334 aa). Ser-701 bears the Phosphoserine mark. A disordered region spans residues 716–736; sequence EAGGATSVQIEMNKKREAEFQ. A compositionally biased stretch (basic and acidic residues) spans 727–736; it reads MNKKREAEFQ.

It belongs to the TRAFAC class myosin-kinesin ATPase superfamily. Myosin family. Muscle myosin is a hexameric protein that consists of 2 heavy chain subunits (MHC), 2 alkali light chain subunits (MLC) and 2 regulatory light chain subunits (MLC-2). Interacts with ECPAS. Interacts (via C-terminus) with LRRC39.

It localises to the cytoplasm. The protein localises to the myofibril. It is found in the sarcomere. Functionally, myosins are actin-based motor molecules with ATPase activity essential for muscle contraction. Forms regular bipolar thick filaments that, together with actin thin filaments, constitute the fundamental contractile unit of skeletal and cardiac muscle. This chain is Myosin-7 (MYH7), found in Oryctolagus cuniculus (Rabbit).